Reading from the N-terminus, the 65-residue chain is VESP-VB2 (65 aa).

Positions 1 to 23 (MKMSILFLFALIASLACLQLTFA) are cleaved as a signal peptide. 7 AXPX repeats span residues 23-26 (AAPA), 27-30 (ASPF), 31-34 (ANPG), 35-38 (ASPE), 39-42 (AAPL), 43-46 (ADPL), and 47-50 (ADPF). The propeptide occupies 24 to 49 (APAASPFANPGASPEAAPLADPLADP). The residue at position 62 (L62) is a Leucine amide.

It belongs to the MCD family. Mastoparan subfamily. Expressed by the venom gland.

It localises to the secreted. Its function is as follows. Antimicrobial peptide. Shows activity against both Gram-positive and -negative bacteria, as well against fungi. Also promotes important mast cell degranulation. Shows little hemolytic activity on rabbit and human erythrocytes. Its mast cell degranulation activity may be related to the activation of G-protein coupled receptors in mast cells as well as interaction with other proteins located in cell endosomal membranes in the mast cells. In Vespa bicolor (Black shield wasp), this protein is VESP-VB2.